Reading from the N-terminus, the 388-residue chain is Large ribosomal subunit protein uL3B (388 aa).

Residues 1-10 (MSHCKFEQPR) show a composition bias toward basic and acidic residues. Positions 1-34 (MSHCKFEQPRHGSLGFLPRKRASRQRGKVKAFPK) are disordered. Residues 18–31 (PRKRASRQRGKVKA) show a composition bias toward basic residues.

Belongs to the universal ribosomal protein uL3 family. In terms of assembly, component of the large ribosomal subunit (LSU). Mature yeast ribosomes consist of a small (40S) and a large (60S) subunit. The 40S small subunit contains 1 molecule of ribosomal RNA (18S rRNA) and at least 33 different proteins. The large 60S subunit contains 3 rRNA molecules (25S, 5.8S and 5S rRNA) and at least 46 different proteins. uL3 forms together with ES39L one of the contact sites for the signal recognition particle that targets ribosomes to the endoplasmic reticulum membrane.

It localises to the cytoplasm. In terms of biological role, component of the ribosome, a large ribonucleoprotein complex responsible for the synthesis of proteins in the cell. The small ribosomal subunit (SSU) binds messenger RNAs (mRNAs) and translates the encoded message by selecting cognate aminoacyl-transfer RNA (tRNA) molecules. The large subunit (LSU) contains the ribosomal catalytic site termed the peptidyl transferase center (PTC), which catalyzes the formation of peptide bonds, thereby polymerizing the amino acids delivered by tRNAs into a polypeptide chain. The nascent polypeptides leave the ribosome through a tunnel in the LSU and interact with protein factors that function in enzymatic processing, targeting, and the membrane insertion of nascent chains at the exit of the ribosomal tunnel. uL3 plays a role in coordinating processes of accommodating the aminoacyl-tRNA in the PTC. In Schizosaccharomyces pombe (strain 972 / ATCC 24843) (Fission yeast), this protein is Large ribosomal subunit protein uL3B (rpl302).